The following is a 188-amino-acid chain: Threonylcarbamoyl-AMP synthase (188 aa).

The YrdC-like domain occupies 3-188 (QLHPSEIKDI…RSGKILRNGQ (186 aa)).

This sequence belongs to the SUA5 family. TsaC subfamily.

Its subcellular location is the cytoplasm. It carries out the reaction L-threonine + hydrogencarbonate + ATP = L-threonylcarbamoyladenylate + diphosphate + H2O. Functionally, required for the formation of a threonylcarbamoyl group on adenosine at position 37 (t(6)A37) in tRNAs that read codons beginning with adenine. Catalyzes the conversion of L-threonine, HCO(3)(-)/CO(2) and ATP to give threonylcarbamoyl-AMP (TC-AMP) as the acyladenylate intermediate, with the release of diphosphate. The protein is Threonylcarbamoyl-AMP synthase of Shewanella sp. (strain MR-4).